Here is a 45-residue protein sequence, read N- to C-terminus: Parabutoporin (45 aa).

As to quaternary structure, monomer and homodimer. In terms of tissue distribution, expressed by the venom gland.

Its subcellular location is the secreted. It localises to the target cell membrane. In terms of biological role, at high concentrations, acts as a pore former in cellular membranes and causes the leakage of the cells. At submicromolar concentrations, degranulates granulocytes and has a weak hemolytic activity against human red blood cells. Also strongly inhibits the production of superoxide anions. Has a strong antibacterial activity against Gram-negative bacteria but is less active against Gram-positive bacteria. Also has antifungal activity. Induces reversible G-protein dependent Ca(2+) release from intracellular stores and increase Ca(2+) influx in HL-60 cells. Induces the activation of the Rac pathway in granulocytes. Synergistically enhances the excitatory effects of short and long chain ion-channel-specific neurotoxins by interaction with the neuronal membranes. The protein is Parabutoporin of Parabuthus schlechteri (Scorpion).